The primary structure comprises 921 residues: Valine--tRNA ligase (921 aa).

The short motif at 40–50 is the 'HIGH' region element; the sequence is PNVTGSLHMGH. Positions 522–526 match the 'KMSKS' region motif; the sequence is KMSKS. Lys525 lines the ATP pocket. The stretch at 849–921 forms a coiled coil; sequence MADLIDKEAE…LQHKNRIESL (73 aa).

It belongs to the class-I aminoacyl-tRNA synthetase family. ValS type 1 subfamily. As to quaternary structure, monomer.

It is found in the cytoplasm. It catalyses the reaction tRNA(Val) + L-valine + ATP = L-valyl-tRNA(Val) + AMP + diphosphate. Functionally, catalyzes the attachment of valine to tRNA(Val). As ValRS can inadvertently accommodate and process structurally similar amino acids such as threonine, to avoid such errors, it has a 'posttransfer' editing activity that hydrolyzes mischarged Thr-tRNA(Val) in a tRNA-dependent manner. The polypeptide is Valine--tRNA ligase (Legionella pneumophila (strain Lens)).